A 460-amino-acid polypeptide reads, in one-letter code: MTPDEVRRTRATVVGGARSGRAAARLLAKVGGEVFLTEQDAPSDGAAAALDEAGVEYEFGGHTAEALDADVLVLSPGVPTQSNIVQQALRAGLDVYSEIEAASWFCDAPIVAITGTNGKTTTTSLTGHVFRTAFADTLGREAIVAGNIGYPFSDYVLETEPTDVVVLEVSSFQLDHVETFRPRVSVLLNITPDHLGRYDHDFEAYAQAKHNIFRNQGEGDVVVYNRDDDDVRNAAEEAAAEQGVRPMAITREGVPAAGAGFRDGRIVLRTDDEDDSLMPQDELALRGRHNMYNSLAAAVSARVMEVENDVIRESLSGFEGVPHRLEEVHTVDDVLYVNDSKATNVNAVWYALESFDRPIVLIAGGRDKGNDYTDLKPLVRDQVRAVVALGESAEKVERELGGEAPDHSRAETMEDALTQAQRAAQPGDVVLLSPACSSFDMYENYEERGDTFRRLVETLL.

Position 115–121 (115–121) interacts with ATP; the sequence is GTNGKTT.

This sequence belongs to the MurCDEF family.

Its subcellular location is the cytoplasm. The enzyme catalyses UDP-N-acetyl-alpha-D-muramoyl-L-alanine + D-glutamate + ATP = UDP-N-acetyl-alpha-D-muramoyl-L-alanyl-D-glutamate + ADP + phosphate + H(+). The protein operates within cell wall biogenesis; peptidoglycan biosynthesis. Its function is as follows. Cell wall formation. Catalyzes the addition of glutamate to the nucleotide precursor UDP-N-acetylmuramoyl-L-alanine (UMA). The protein is UDP-N-acetylmuramoylalanine--D-glutamate ligase of Salinibacter ruber (strain DSM 13855 / M31).